Here is a 77-residue protein sequence, read N- to C-terminus: Cell division topological specificity factor (77 aa).

It belongs to the MinE family.

In terms of biological role, prevents the cell division inhibition by proteins MinC and MinD at internal division sites while permitting inhibition at polar sites. This ensures cell division at the proper site by restricting the formation of a division septum at the midpoint of the long axis of the cell. This Nautilia profundicola (strain ATCC BAA-1463 / DSM 18972 / AmH) protein is Cell division topological specificity factor.